The sequence spans 567 residues: Platelet glycoprotein V (567 aa).

An N-terminal signal peptide occupies residues 1 to 16 (MLRSALLSAVLPLLRA). In terms of domain architecture, LRRNT spans 17 to 50 (QPFPCPKTCKCVVRDAAQCSGGSVAHIAELGLPT). The Extracellular portion of the chain corresponds to 17-522 (QPFPCPKTCK…ESPNNRLYWG (506 aa)). N-linked (GlcNAc...) asparagine glycans are attached at residues asparagine 51 and asparagine 67. LRR repeat units lie at residues 75-96 (VLQRQMLSDSHISAIDPGTFND), 99-120 (KLKTLRLTRNKISRLPRAILDK), 123-144 (LLEQLFLDHNALRDLDQNLFQQ), 147-168 (NLQELGLNQNQLSFLPANLFSS), 171-193 (ELKLLDLSRNNLTHLPKGLLGAQ), 195-216 (KLEKLLLYSNQLTSVDSGLLSN), 219-240 (ALTELRLERNHLRSVAPGAFDR), 243-264 (NLSSLTLSGNLLESLPPALFLH), 267-288 (SVSRLTLFENPLEELPDVLFGE), 291-312 (GLRELWLNGTHLSTLPAAAFRN), 315-337 (GLQTLGLTRNPRLSALPRGVFQG), 340-361 (ELRVLGLHTNALAELRDDALRG), 364-385 (HLRQVSLRHNRLRALPRTLFRN), and 388-409 (SLESVQLEHNQLETLPGDVFAA). Asparagine 181 is a glycosylation site (N-linked (GlcNAc...) asparagine). N-linked (GlcNAc...) asparagine glycosylation occurs at asparagine 243. N-linked (GlcNAc...) asparagine glycosylation is found at asparagine 298 and asparagine 312. Asparagine 385 carries an N-linked (GlcNAc...) asparagine glycan. The LRRCT domain occupies 421 to 474 (NPWLCDCGLWRFLQWLRHHPDILGRDEPPQCRGPEPRASLSFWELLQGDPWCPD). The chain crosses the membrane as a helical span at residues 523–543 (LYILLLVAQAIIAAFIVFAMI). Residues 544–567 (KIGQLFRTLIREKLLLEAMGKSCN) lie on the Cytoplasmic side of the membrane.

It localises to the membrane. In terms of biological role, the GPIb-V-IX complex functions as the vWF receptor and mediates vWF-dependent platelet adhesion to blood vessels. The adhesion of platelets to injured vascular surfaces in the arterial circulation is a critical initiating event in hemostasis. In Mus musculus (Mouse), this protein is Platelet glycoprotein V (Gp5).